Reading from the N-terminus, the 740-residue chain is MEQTYEYAWIIPFIPLPVPMLIGAGLFLFPTATKSFRRMWAFQSVLLLSIVMVFSIYLSIQQINSSSFYQYVWSWIINNDFSLDFGYLIDPLTSIMSILITTVGIMVLIYSDNYMAHDQGYLRFFAYMSFFSTSMLGLVTSSNLIQIYIFWELVGLCSYLLIGFWFTRPVAANACQKAFVTNRVGDFGLLLGILGFYWITGSFEFRDLFEIFNNLIYNNEVDFLFVTLCAVLLFAGAVAKSAQFPLHVWLPDAMEGPTPISALIHAATMVAAGIFLVARLLPLFRVIPYIMYLISVIGIITVLLGATLALAQKDIKRGLAYSTMSQLGYMMLALGMGSYRSALFHLITHAYSKALLFLGSGSIIHSMETIVGYSPAKSQNMGLMGGLRKHVPISKITFLLGTLSLCGIPPLACFWSKDEILNDSWLYSPIFAIIAWATAGLTAFYMFRIYLLTFEGHLNAHFQNYGGKQKTPFYSISLWGKNGVKKNSCLLTMNNNESTYFFAKTKYPIDKNGRKMTRPFMTIAHFEHKAVYSYPYESDNTMLFPIFVLGLFTLFVGSIGIPFNQEGGNLDILSKWLAPSINLLHQKSNNSMDWNEFLKDAVLSVSIAYFGIFIASFLYKPIYSSLKNFELINSFVKKGPKRILWDKIINGIYDWSYNRAYIDAFYTRFLVGGIRGLAEFTHFFDRRVIDGMTNGVGVISFIVGEGIKYIGGGRISSYLFLYLAYVSIFLLVYYLLFSTL.

16 helical membrane passes run 9-29 (WIIP…LFLF), 40-60 (WAFQ…YLSI), 89-109 (IDPL…MVLI), 125-145 (FAYM…SNLI), 147-167 (IYIF…FWFT), 185-205 (GDFG…SFEF), 219-239 (NEVD…GAVA), 258-278 (TPIS…FLVA), 286-306 (VIPY…LLGA), 327-347 (LGYM…FHLI), 354-374 (ALLF…VGYS), 396-416 (ITFL…CFWS), 425-445 (WLYS…TAFY), 543-563 (LFPI…GIPF), 602-622 (VLSV…YKPI), and 717-737 (SYLF…YLLF).

Belongs to the complex I subunit 5 family. NDH is composed of at least 16 different subunits, 5 of which are encoded in the nucleus.

It is found in the plastid. The protein localises to the chloroplast thylakoid membrane. The catalysed reaction is a plastoquinone + NADH + (n+1) H(+)(in) = a plastoquinol + NAD(+) + n H(+)(out). The enzyme catalyses a plastoquinone + NADPH + (n+1) H(+)(in) = a plastoquinol + NADP(+) + n H(+)(out). Its function is as follows. NDH shuttles electrons from NAD(P)H:plastoquinone, via FMN and iron-sulfur (Fe-S) centers, to quinones in the photosynthetic chain and possibly in a chloroplast respiratory chain. The immediate electron acceptor for the enzyme in this species is believed to be plastoquinone. Couples the redox reaction to proton translocation, and thus conserves the redox energy in a proton gradient. The sequence is that of NAD(P)H-quinone oxidoreductase subunit 5, chloroplastic (ndhF) from Nicotiana sylvestris (Wood tobacco).